We begin with the raw amino-acid sequence, 427 residues long: Tryptophan synthase beta chain 1 (427 aa).

Lys-107 is subject to N6-(pyridoxal phosphate)lysine.

Belongs to the TrpB family. Tetramer of two alpha and two beta chains. It depends on pyridoxal 5'-phosphate as a cofactor.

It carries out the reaction (1S,2R)-1-C-(indol-3-yl)glycerol 3-phosphate + L-serine = D-glyceraldehyde 3-phosphate + L-tryptophan + H2O. It functions in the pathway amino-acid biosynthesis; L-tryptophan biosynthesis; L-tryptophan from chorismate: step 5/5. Functionally, the beta subunit is responsible for the synthesis of L-tryptophan from indole and L-serine. This is Tryptophan synthase beta chain 1 (trpB1) from Aeropyrum pernix (strain ATCC 700893 / DSM 11879 / JCM 9820 / NBRC 100138 / K1).